We begin with the raw amino-acid sequence, 262 residues long: Tryptophan synthase alpha chain (262 aa).

Catalysis depends on proton acceptor residues glutamate 48 and aspartate 59.

Belongs to the TrpA family. In terms of assembly, tetramer of two alpha and two beta chains.

It catalyses the reaction (1S,2R)-1-C-(indol-3-yl)glycerol 3-phosphate + L-serine = D-glyceraldehyde 3-phosphate + L-tryptophan + H2O. Its pathway is amino-acid biosynthesis; L-tryptophan biosynthesis; L-tryptophan from chorismate: step 5/5. The alpha subunit is responsible for the aldol cleavage of indoleglycerol phosphate to indole and glyceraldehyde 3-phosphate. The chain is Tryptophan synthase alpha chain from Helicobacter pylori (strain P12).